Here is a 245-residue protein sequence, read N- to C-terminus: Protein crossbronx (245 aa).

The 158-residue stretch at 20-177 (HQEYKILAEY…VQESIAESKA (158 aa)) folds into the UBC core domain.

This sequence belongs to the ubiquitin-conjugating enzyme family. FTS subfamily.

The chain is Protein crossbronx (cbx) from Drosophila mojavensis (Fruit fly).